Here is a 640-residue protein sequence, read N- to C-terminus: Probable potassium transport system protein Kup 2 (640 aa).

Residues 1–20 are disordered; the sequence is MTADIAATPAETPATNGHGD. The next 12 membrane-spanning stretches (helical) occupy residues 30–50, 71–91, 117–137, 155–175, 183–203, 224–244, 265–285, 294–314, 363–383, 385–405, 410–430, and 437–457; these read LTLG…LYAL, VVSL…VVIL, ASII…DAVI, AAFD…LFAV, VAAF…IAAF, FMLH…LAVT, WLFV…ALVI, PFFL…ATVA, LLLV…ALAS, YGIS…VVIW, WSPI…LTFL, and VLEG…LMYT.

It belongs to the HAK/KUP transporter (TC 2.A.72) family.

The protein resides in the cell inner membrane. The catalysed reaction is K(+)(in) + H(+)(in) = K(+)(out) + H(+)(out). In terms of biological role, transport of potassium into the cell. Likely operates as a K(+):H(+) symporter. The chain is Probable potassium transport system protein Kup 2 from Bradyrhizobium sp. (strain ORS 278).